Here is a 259-residue protein sequence, read N- to C-terminus: Flap endonuclease Xni (259 aa).

D109 contacts Mg(2+). The 91-residue stretch at 165–255 (LKPEQLADYW…FNLQDIRYEK (91 aa)) folds into the 5'-3' exonuclease domain. K(+)-binding residues include L176, A177, I187, and V190. The tract at residues 189–194 (GVGPKA) is interaction with DNA.

The protein belongs to the Xni family. It depends on Mg(2+) as a cofactor. K(+) is required as a cofactor.

Its function is as follows. Has flap endonuclease activity. During DNA replication, flap endonucleases cleave the 5'-overhanging flap structure that is generated by displacement synthesis when DNA polymerase encounters the 5'-end of a downstream Okazaki fragment. The polypeptide is Flap endonuclease Xni (Aliivibrio fischeri (strain ATCC 700601 / ES114) (Vibrio fischeri)).